The primary structure comprises 113 residues: Photosystem II reaction center Psb28 protein (113 aa).

This sequence belongs to the Psb28 family. Part of the photosystem II complex.

It is found in the cellular thylakoid membrane. In Nostoc punctiforme (strain ATCC 29133 / PCC 73102), this protein is Photosystem II reaction center Psb28 protein.